A 217-amino-acid chain; its full sequence is Ribonuclease HII (217 aa).

The region spanning 17-207 (KVIYGVDEAG…CVGQSVSGAR (191 aa)) is the RNase H type-2 domain. The a divalent metal cation site is built by Asp-23, Glu-24, and Asp-116.

Belongs to the RNase HII family. Mn(2+) serves as cofactor. It depends on Mg(2+) as a cofactor.

The protein resides in the cytoplasm. It carries out the reaction Endonucleolytic cleavage to 5'-phosphomonoester.. In terms of biological role, endonuclease that specifically degrades the RNA of RNA-DNA hybrids. The chain is Ribonuclease HII from Nitrosomonas europaea (strain ATCC 19718 / CIP 103999 / KCTC 2705 / NBRC 14298).